We begin with the raw amino-acid sequence, 174 residues long: uncharacterized protein (174 aa).

This is an uncharacterized protein from Rickettsia conorii (strain ATCC VR-613 / Malish 7).